A 556-amino-acid chain; its full sequence is 2-succinyl-5-enolpyruvyl-6-hydroxy-3-cyclohexene-1-carboxylate synthase (556 aa).

The protein belongs to the TPP enzyme family. MenD subfamily. Homodimer. Requires Mg(2+) as cofactor. The cofactor is Mn(2+). Thiamine diphosphate serves as cofactor.

The catalysed reaction is isochorismate + 2-oxoglutarate + H(+) = 5-enolpyruvoyl-6-hydroxy-2-succinyl-cyclohex-3-ene-1-carboxylate + CO2. Its pathway is quinol/quinone metabolism; 1,4-dihydroxy-2-naphthoate biosynthesis; 1,4-dihydroxy-2-naphthoate from chorismate: step 2/7. It participates in quinol/quinone metabolism; menaquinone biosynthesis. In terms of biological role, catalyzes the thiamine diphosphate-dependent decarboxylation of 2-oxoglutarate and the subsequent addition of the resulting succinic semialdehyde-thiamine pyrophosphate anion to isochorismate to yield 2-succinyl-5-enolpyruvyl-6-hydroxy-3-cyclohexene-1-carboxylate (SEPHCHC). The protein is 2-succinyl-5-enolpyruvyl-6-hydroxy-3-cyclohexene-1-carboxylate synthase of Escherichia coli O7:K1 (strain IAI39 / ExPEC).